Consider the following 314-residue polypeptide: L-lactate dehydrogenase 2 (314 aa).

NAD(+)-binding positions include valine 16, aspartate 37, lysine 42, tyrosine 68, and 82 to 83 (GL). Residues glutamine 85, arginine 91, and 123 to 126 (NPVD) each bind substrate. NAD(+)-binding positions include 121-123 (ATN) and serine 146. 151–154 (DSAR) provides a ligand contact to substrate. 2 residues coordinate beta-D-fructose 1,6-bisphosphate: arginine 156 and histidine 171. The Proton acceptor role is filled by histidine 178. The residue at position 223 (tyrosine 223) is a Phosphotyrosine. Threonine 232 is a substrate binding site.

This sequence belongs to the LDH/MDH superfamily. LDH family. Homotetramer.

The protein resides in the cytoplasm. It carries out the reaction (S)-lactate + NAD(+) = pyruvate + NADH + H(+). It participates in fermentation; pyruvate fermentation to lactate; (S)-lactate from pyruvate: step 1/1. Its activity is regulated as follows. Allosterically activated by fructose 1,6-bisphosphate (FBP). In terms of biological role, catalyzes the conversion of lactate to pyruvate. This is L-lactate dehydrogenase 2 from Bacillus cereus (strain ATCC 10987 / NRS 248).